The primary structure comprises 462 residues: MVSPRKGKRIRMLKKNDIIQVAISDLSHEGAGVAKHDGFVFFVDNALPEEVIDMRVLKVNKNSGFGKVEAYHYLSPARNADVNLTYLRTGIADLGHLTYEDQLTFKKKQVQDSLYKIAGISDVTVESTIGMTEPLAYRNKAQVPVRRVNGQLETGFFRKHSHDLIPISDYYIQDKEIDRLINFTRDLLRRFDIKPYDETEQTGLLRNIVVRRGHYSGEMMLVLVTTRPKVFRVDQVIEKIVEAFPAVVSIIQNINDKNTNAIFGKDFKTLYGKDTITDSMLGNNYAISAQSFYQVNTVMAEKLYQTAIAFSDLSKDDIVIDAYSGIGTIGLSFAKTVKAVYGVEVIEAAVRDAQHNAALNGITNAYFVADTAEHAMATWAKDGIKPSVILVDPPRKGLTESFIQASVAMGPQKITYVSCNPATMARDIKRYQELGYKLAKVQPVDLFPQTHHVECVVLLIKE.

In terms of domain architecture, TRAM spans 12–70 (MLKKNDIIQVAISDLSHEGAGVAKHDGFVFFVDNALPEEVIDMRVLKVNKNSGFGKVEA). Residues Gln-294, Tyr-323, Glu-344, and Asp-392 each contribute to the S-adenosyl-L-methionine site. Residue Cys-419 is the Nucleophile of the active site.

Belongs to the class I-like SAM-binding methyltransferase superfamily. RNA M5U methyltransferase family.

This is an uncharacterized protein from Streptococcus pyogenes serotype M3 (strain ATCC BAA-595 / MGAS315).